A 598-amino-acid polypeptide reads, in one-letter code: Cytochrome P450 monooxygenase phmB (598 aa).

Residues 107-127 traverse the membrane as a helical segment; the sequence is VAAKIAALLFVAGLFWAVSVL. N-linked (GlcNAc...) asparagine glycans are attached at residues N171, N428, and N494. C542 is a heme binding site. Residues N549 and N581 are each glycosylated (N-linked (GlcNAc...) asparagine).

Belongs to the cytochrome P450 family. Heme is required as a cofactor.

It localises to the membrane. The protein operates within mycotoxin biosynthesis. Its function is as follows. Cytochrome P450 monooxygenase; part of the gene cluster that mediates the biosynthesis of the mycotoxins phomacins, leucine-derived cytochalasans with potent actin polymerization-inhibitory activities and monocot-specific antigerminative activities. The first step in the pathway is catalyzed by the hybrid PKS-NRPS phmA, assisted by the enoyl reductase phmE, that are responsible for fusion of the leucine precursor and the polyketide backbone to produce a 2-pyrrolidone intermediate. The polyketide synthase module (PKS) of phmA is responsible for the synthesis of the polyketide backbone and the downstream nonribosomal peptide synthetase (NRPS) amidates the carboxyl end of the polyketide with the leucine precursor. Because phmA lacks a designated enoylreductase (ER) domain, the required activity is provided the enoyl reductase phmE. Reduction by the hydrolyase phmG, followed by dehydration and intra-molecular Diels-Alder cyclization by the Diels-Alderase phmD then yield the required isoindolone-fused macrocycle. A number of oxidative steps catalyzed by the tailoring cytochrome P450 monooxygenase phmB, the FAD-linked oxidoreductase phmC and the short-chain dehydrogenase/reductase phmF, are further required to afford the final products, phomacin D and phomacin E. In Phaeosphaeria nodorum (strain SN15 / ATCC MYA-4574 / FGSC 10173) (Glume blotch fungus), this protein is Cytochrome P450 monooxygenase phmB.